A 214-amino-acid polypeptide reads, in one-letter code: Cytochrome c biogenesis ATP-binding export protein CcmA (214 aa).

The ABC transporter domain occupies 12–214; the sequence is LAAHALAFSR…TRMLTLEAAA (203 aa). 44-51 contributes to the ATP binding site; it reads GDNGAGKT.

It belongs to the ABC transporter superfamily. CcmA exporter (TC 3.A.1.107) family. The complex is composed of two ATP-binding proteins (CcmA) and two transmembrane proteins (CcmB).

The protein localises to the cell inner membrane. The enzyme catalyses heme b(in) + ATP + H2O = heme b(out) + ADP + phosphate + H(+). Functionally, part of the ABC transporter complex CcmAB involved in the biogenesis of c-type cytochromes; once thought to export heme, this seems not to be the case, but its exact role is uncertain. Responsible for energy coupling to the transport system. This Xanthomonas oryzae pv. oryzae (strain MAFF 311018) protein is Cytochrome c biogenesis ATP-binding export protein CcmA.